A 375-amino-acid polypeptide reads, in one-letter code: Chaperone protein DnaJ 1 (375 aa).

The J domain occupies 4–68; the sequence is DYYAILGVER…EKRRIVDMGG (65 aa). A CR-type zinc finger spans residues 127 to 209; that stretch reads GTKKPITIDT…CGGDGRVRTQ (83 aa). C140, C143, C157, C160, C183, C186, C197, and C200 together coordinate Zn(2+). CXXCXGXG motif repeat units lie at residues 140–147, 157–164, 183–190, and 197–204; these read CDRCEGTG, CSTCNGSG, CPTCRGTG, and CDKCGGDG.

It belongs to the DnaJ family. As to quaternary structure, homodimer. Zn(2+) serves as cofactor.

The protein localises to the cytoplasm. Participates actively in the response to hyperosmotic and heat shock by preventing the aggregation of stress-denatured proteins and by disaggregating proteins, also in an autonomous, DnaK-independent fashion. Unfolded proteins bind initially to DnaJ; upon interaction with the DnaJ-bound protein, DnaK hydrolyzes its bound ATP, resulting in the formation of a stable complex. GrpE releases ADP from DnaK; ATP binding to DnaK triggers the release of the substrate protein, thus completing the reaction cycle. Several rounds of ATP-dependent interactions between DnaJ, DnaK and GrpE are required for fully efficient folding. Also involved, together with DnaK and GrpE, in the DNA replication of plasmids through activation of initiation proteins. The polypeptide is Chaperone protein DnaJ 1 (Corynebacterium diphtheriae (strain ATCC 700971 / NCTC 13129 / Biotype gravis)).